The chain runs to 308 residues: Maspardin (308 aa).

One can recognise an AB hydrolase-1 domain in the interval 87 to 159; sequence FCDGFRKLLD…NSFWLMPAFM (73 aa). Ser-304 is modified (phosphoserine).

It belongs to the AB hydrolase superfamily. Interacts with CD4. Interacts with ALDH16A1. Expressed in cell lines FT.1 and in a L cell fibroblast derivative (at protein level).

It localises to the cytoplasm. Functionally, may play a role as a negative regulatory factor in CD4-dependent T-cell activation. This is Maspardin (Spg21) from Mus musculus (Mouse).